The chain runs to 483 residues: Sphingomyelin phosphodiesterase 5 (483 aa).

The disordered stretch occupies residues 1-20; the sequence is MSLPDISRRRSPVPQEDWPL. Residues 80-100 traverse the membrane as a helical segment; it reads VLLPLVVVGLPLALVGLALWL. Mg(2+) is bound at residue glutamate 209. Catalysis depends on histidine 471, which acts as the Proton acceptor.

It belongs to the neutral sphingomyelinase family. Requires Mg(2+) as cofactor. It depends on Mn(2+) as a cofactor. Highly expressed in testis, pancreas, epididymis, and brain.

The protein resides in the mitochondrion inner membrane. Its subcellular location is the endoplasmic reticulum membrane. It carries out the reaction a sphingomyelin + H2O = phosphocholine + an N-acylsphing-4-enine + H(+). The enzyme catalyses N-(hexadecanoyl)-sphing-4-enine-1-phosphocholine + H2O = N-hexadecanoylsphing-4-enine + phosphocholine + H(+). It functions in the pathway lipid metabolism; sphingolipid metabolism. Its activity is regulated as follows. Activated by anionic phospholipids, specially cardiolipin and phosphatidylserine. Functionally, catalyzes the hydrolysis of membrane sphingomyelin to form phosphorylcholine and ceramide. This is Sphingomyelin phosphodiesterase 5 from Mus musculus (Mouse).